Reading from the N-terminus, the 138-residue chain is Superoxide dismutase [Mn] (138 aa).

Mn(2+) contacts are provided by glutamine 1, histidine 49, aspartate 133, and histidine 137.

This sequence belongs to the iron/manganese superoxide dismutase family. Mn(2+) serves as cofactor.

It carries out the reaction 2 superoxide + 2 H(+) = H2O2 + O2. Its function is as follows. Destroys superoxide anion radicals which are normally produced within the cells and which are toxic to biological systems. This is Superoxide dismutase [Mn] (sodA) from Mycobacteroides chelonae (Mycobacterium chelonae).